Consider the following 206-residue polypeptide: Ribosomal RNA small subunit methyltransferase G (206 aa).

S-adenosyl-L-methionine is bound by residues Gly74, Leu79, Val125 to Glu126, and Arg140.

The protein belongs to the methyltransferase superfamily. RNA methyltransferase RsmG family.

Its subcellular location is the cytoplasm. It catalyses the reaction guanosine(527) in 16S rRNA + S-adenosyl-L-methionine = N(7)-methylguanosine(527) in 16S rRNA + S-adenosyl-L-homocysteine. Functionally, specifically methylates the N7 position of guanine in position 527 of 16S rRNA. The protein is Ribosomal RNA small subunit methyltransferase G of Shewanella amazonensis (strain ATCC BAA-1098 / SB2B).